A 133-amino-acid polypeptide reads, in one-letter code: NADH dehydrogenase [ubiquinone] 1 alpha subcomplex subunit 6 (133 aa).

This sequence belongs to the complex I LYR family. Complex I is composed of at least 49 different subunits.

Its subcellular location is the mitochondrion inner membrane. Accessory subunit of the mitochondrial membrane respiratory chain NADH dehydrogenase (Complex I), that is believed to be not involved in catalysis. Complex I functions in the transfer of electrons from NADH to the respiratory chain. The immediate electron acceptor for the enzyme is believed to be ubiquinone. This is NADH dehydrogenase [ubiquinone] 1 alpha subcomplex subunit 6 from Arabidopsis thaliana (Mouse-ear cress).